Here is a 262-residue protein sequence, read N- to C-terminus: 3-methyl-2-oxobutanoate hydroxymethyltransferase (262 aa).

Residues D44 and D83 each contribute to the Mg(2+) site. Residues 44-45 (DS), D83, and K112 contribute to the 3-methyl-2-oxobutanoate site. E114 contacts Mg(2+). The Proton acceptor role is filled by E177.

Belongs to the PanB family. As to quaternary structure, homodecamer; pentamer of dimers. Mg(2+) is required as a cofactor.

It localises to the cytoplasm. The catalysed reaction is 3-methyl-2-oxobutanoate + (6R)-5,10-methylene-5,6,7,8-tetrahydrofolate + H2O = 2-dehydropantoate + (6S)-5,6,7,8-tetrahydrofolate. Its pathway is cofactor biosynthesis; coenzyme A biosynthesis. Catalyzes the reversible reaction in which hydroxymethyl group from 5,10-methylenetetrahydrofolate is transferred onto alpha-ketoisovalerate to form ketopantoate. The protein is 3-methyl-2-oxobutanoate hydroxymethyltransferase of Metallosphaera sedula (strain ATCC 51363 / DSM 5348 / JCM 9185 / NBRC 15509 / TH2).